The primary structure comprises 304 residues: Agmatinase (304 aa).

Residues histidine 126, aspartate 149, histidine 151, aspartate 153, aspartate 230, and aspartate 232 each coordinate Mn(2+).

This sequence belongs to the arginase family. Agmatinase subfamily. Mn(2+) serves as cofactor.

The catalysed reaction is agmatine + H2O = urea + putrescine. It participates in amine and polyamine biosynthesis; putrescine biosynthesis via agmatine pathway; putrescine from agmatine: step 1/1. In terms of biological role, catalyzes the formation of putrescine from agmatine. This chain is Agmatinase, found in Edwardsiella ictaluri (strain 93-146).